The chain runs to 380 residues: MKKKSVWIKADEGGWEEQKERITTGLESGADCVLVNPGDVEKVRELGNITVAAFARDNKSGADIVVVGKRGEGDGTKPLPQEIPGSFDVNAATLLTDKGVTVGGYVVIKDRSYERFAAEMGKICDYLLVTGTDWKVIPLENLIADLQREKVKIIFGVKSAEEARLAFQTLETGADGVLLDSGNPQEIKDTIKAARELESESTELESAVVTRVEPLGMGDRVCVDTCNLMQRGEGMLIGSQASGMFLVNSESDDSPYVAARPFRVNAGAVHSYIKIGDKTRYLSELQAGDSVTIIDSRGKQREGIVGRIKIESRPLMLIEAKAGDRTLTAILQNAETIKLVGKGGTPISVAKLKKGDEVLVRLEEGARHFGKKIEETIIEK.

The protein belongs to the archaeal-type DHQ synthase family.

The catalysed reaction is 2-amino-2,3,7-trideoxy-D-lyxo-hept-6-ulosonate + NAD(+) + H2O = 3-dehydroquinate + NH4(+) + NADH + H(+). In terms of biological role, catalyzes the oxidative deamination and cyclization of 2-amino-3,7-dideoxy-D-threo-hept-6-ulosonic acid (ADH) to yield 3-dehydroquinate (DHQ), which is fed into the canonical shikimic pathway of aromatic amino acid biosynthesis. The polypeptide is 3-dehydroquinate synthase (Methanosarcina mazei (strain ATCC BAA-159 / DSM 3647 / Goe1 / Go1 / JCM 11833 / OCM 88) (Methanosarcina frisia)).